The chain runs to 634 residues: Polyadenylate-binding protein 1A (634 aa).

RRM domains lie at 11–89 (ASLY…WSQR), 99–175 (GNIF…RFKS), 191–268 (TNVY…RAQK), and 294–370 (VNLY…LAQR). One can recognise a PABC domain in the interval 541 to 618 (QEPLTASMLA…AVAVLQAHQA (78 aa)).

This sequence belongs to the polyadenylate-binding protein type-1 family. Interacts with ybx1; interaction recruits pabpc1a on C5-methylcytosine (m5C)-containing mRNAs, preventing their degradation.

Its subcellular location is the cytoplasm. Functionally, binds the poly(A) tail of mRNA. Prevents mRNA deadenylation and confers poly(A) stability. Binds to N6-methyladenosine (m6A)-containing mRNAs. Stimulates the translation of mRNAs to which it is bound, acting, at least in part, with dazl. Involved in the maternal-to-zygotic transition in early embryo via interaction with ybx1: interaction recruits pabpc1a on C5-methylcytosine (m5C)-containing maternal mRNAs, preventing their degradation. In Danio rerio (Zebrafish), this protein is Polyadenylate-binding protein 1A.